The primary structure comprises 32 residues: Yop proteins translocation protein A (32 aa).

The chain is Yop proteins translocation protein A (yscA) from Yersinia pestis.